Here is a 236-residue protein sequence, read N- to C-terminus: Glyoxalase 3 (236 aa).

Active-site residues include cysteine 136, histidine 137, and glutamate 168. The residue at position 136 (cysteine 136) is a Cysteine sulfinic acid (-SO2H).

The protein belongs to the peptidase C56 family. HSP31-like subfamily. Monomer.

It carries out the reaction methylglyoxal + H2O = (R)-lactate + H(+). Catalyzes the conversion of methylglyoxal (MG) to D-lactate in a single glutathione (GSH)-independent step. Selective for MG, does not use glyoxal as substrate. Plays a role in detoxifying endogenously produced MG, particularly when glycerol is the principal carbon source. Important for viability in stationary phase. The chain is Glyoxalase 3 from Candida albicans (strain SC5314 / ATCC MYA-2876) (Yeast).